Reading from the N-terminus, the 1157-residue chain is ATP-dependent helicase/deoxyribonuclease subunit B (1157 aa).

In terms of domain architecture, UvrD-like helicase ATP-binding spans 1–277 (MTLQIIAGKS…KLFLENKRAK (277 aa)). Residue 8 to 15 (GKSGTGKT) coordinates ATP. The region spanning 272 to 578 (ENKRAKSDSL…EFSLLPPSLD (307 aa)) is the UvrD-like helicase C-terminal domain. The [4Fe-4S] cluster site is built by C794, C1115, C1118, and C1124.

This sequence belongs to the helicase family. AddB/RexB type 1 subfamily. Heterodimer of AddA and AddB. Mg(2+) serves as cofactor. [4Fe-4S] cluster is required as a cofactor.

Functionally, the heterodimer acts as both an ATP-dependent DNA helicase and an ATP-dependent, dual-direction single-stranded exonuclease. Recognizes the chi site generating a DNA molecule suitable for the initiation of homologous recombination. The AddB subunit has 5' -&gt; 3' nuclease activity but not helicase activity. The protein is ATP-dependent helicase/deoxyribonuclease subunit B of Listeria welshimeri serovar 6b (strain ATCC 35897 / DSM 20650 / CCUG 15529 / CIP 8149 / NCTC 11857 / SLCC 5334 / V8).